Reading from the N-terminus, the 229-residue chain is Non-structural protein P8 (229 aa).

2 consecutive transmembrane segments (helical) span residues 119–139 (IIHM…VCTL) and 162–182 (SLNP…MVCA).

Belongs to the orbivirus NS3 family. As to quaternary structure, forms homooligomers via coiled-coil motif. Interacts with host OPTN; this interaction inhibits innate immune response.

Its subcellular location is the host cell membrane. It localises to the host Golgi apparatus. Functionally, plays a role in the inhibition of host innate immune response. Interacts with host OPTN and thus inhibits the recruitment of TBK1 to the host Golgi apparatus. In turn, downstream partner IRF3 cannot be activated and IFN-beta production is impaired. Facilitates viral particle release either by increasing plasma membrane permeability through a viroporin-like activity or by viral budding. This chain is Non-structural protein P8 (Segment-10), found in Bluetongue virus 17 (isolate USA) (BTV 17).